The sequence spans 717 residues: Choline transporter-like protein 5 (717 aa).

Positions 1–24 (MNDTEKPADTASEEEDFGDPRTYD) are disordered. Over 1 to 38 (MNDTEKPADTASEEEDFGDPRTYDPDFKGPVSNRSCTD) the chain is Cytoplasmic. The helical transmembrane segment at 39–59 (VLCCMIFLLCIVGYIVLGLVA) threads the bilayer. Residues 60–242 (WVHGDPRRAA…KVFEDYATTW (183 aa)) lie on the Extracellular side of the membrane. N-linked (GlcNAc...) asparagine glycans are attached at residues N88 and N190. The helical transmembrane segment at 243–263 (YWILIGLMIAMVLSWIFLILL) threads the bilayer. The Cytoplasmic segment spans residues 264-265 (RF). The chain crosses the membrane as a helical span at residues 266–286 (IAGCLFWVFMIGVIGIIGYGI). Residues 287 to 325 (WHCYQQYTNLQEHPRSVLTVYDIGIQTNISMYFELQQTW) lie on the Extracellular side of the membrane. N314 carries an N-linked (GlcNAc...) asparagine glycan. The helical transmembrane segment at 326-346 (FTLMIILCIIEVIVILMLIFL) threads the bilayer. The Cytoplasmic segment spans residues 347–351 (RNRIR). The chain crosses the membrane as a helical span at residues 352–372 (VAIILLKEGSKAIGYVPSTLV). Residues 373 to 374 (YP) lie on the Extracellular side of the membrane. The helical transmembrane segment at 375-395 (ALTFILLSICICYWVVTAVFL) threads the bilayer. The Cytoplasmic portion of the chain corresponds to 396 to 460 (ATSGVPVYKV…QYIPTFHVYN (65 aa)). A helical transmembrane segment spans residues 461 to 481 (LFVFLWLINFVIALGQCALAG). The Extracellular segment spans residues 482–515 (AFATYYWAMKKPDDIPRYPLFTAFGRAIRYHTGS). A helical membrane pass occupies residues 516 to 536 (LAFGSLIIALIQMFKIVLEYL). Residues 537–610 (NHRLKRTENT…KVAVTDEVTY (74 aa)) are Cytoplasmic-facing. A helical transmembrane segment spans residues 611–631 (FVLFLGKILVAGSIGVLAFLF). Residues 632-649 (FTQRLPVIAQGPASLNYY) are Extracellular-facing. The helical transmembrane segment at 650–670 (WVPLLTVILGSYLIAHGFFSV) threads the bilayer. Residues 671–717 (YAMCVETIFICFLEDLERNDGSTARPYYVSQPLLKIFQEENLQTKQQ) lie on the Cytoplasmic side of the membrane.

The protein belongs to the CTL (choline transporter-like) family.

It localises to the cell membrane. The catalysed reaction is choline(out) + n H(+)(in) = choline(in) + n H(+)(out). In terms of biological role, choline/H+ antiporter. The protein is Choline transporter-like protein 5 (SLC44A5) of Macaca fascicularis (Crab-eating macaque).